The primary structure comprises 254 residues: Phosphate import ATP-binding protein PstB (254 aa).

The 241-residue stretch at 9 to 249 (MSVKDLDLFY…PVDKRTEDYI (241 aa)) folds into the ABC transporter domain. Position 41–48 (41–48 (GPSGCGKS)) interacts with ATP.

This sequence belongs to the ABC transporter superfamily. Phosphate importer (TC 3.A.1.7) family. In terms of assembly, the complex is composed of two ATP-binding proteins (PstB), two transmembrane proteins (PstC and PstA) and a solute-binding protein (PstS).

The protein resides in the cell membrane. The catalysed reaction is phosphate(out) + ATP + H2O = ADP + 2 phosphate(in) + H(+). Its function is as follows. Part of the ABC transporter complex PstSACB involved in phosphate import. Responsible for energy coupling to the transport system. The sequence is that of Phosphate import ATP-binding protein PstB from Clostridioides difficile (strain 630) (Peptoclostridium difficile).